The primary structure comprises 368 residues: MSDNSQKKVIVGMSGGVDSSVSAYLLQQQGYHVEGLFMKNWEEDDDTEYCSAATDLADAQAVCDKLGIELHTVNFAAEYWDNVFELFLEEYKAGRTPNPDILCNKEIKFKAFLEFAAEDLGADYIATGHYVRRHDVDGKSRLLRGMDGNKDQSYFLYTLSHEQIAQSLFPVGELEKPQVRKIAEELELATAKKKDSTGICFIGERKFTDFLARYLPAQPGPILSVDDNKPMGQHQGLMYHTLGQRKGLGIGGVKDGGEDPWYVVDKDVANNILYVAQGHEHPRLMSYGLIAQQLHWVDRQPLTAELRCTVKTRYRQADISCTVTPLGDDRITVRFDEPFAAVTPGQSAVFYLDDVCLGGGIIEERLQE.

ATP-binding positions include 12-19 (GMSGGVDS) and methionine 38. Residues 98 to 100 (NPD) are interaction with target base in tRNA. The active-site Nucleophile is the cysteine 103. A disulfide bridge links cysteine 103 with cysteine 200. Glycine 128 is a binding site for ATP. An interaction with tRNA region spans residues 150–152 (KDQ). Cysteine 200 acts as the Cysteine persulfide intermediate in catalysis. The segment at 313-314 (RY) is interaction with tRNA.

This sequence belongs to the MnmA/TRMU family. Interacts with TusE.

The protein localises to the cytoplasm. It catalyses the reaction S-sulfanyl-L-cysteinyl-[protein] + uridine(34) in tRNA + AH2 + ATP = 2-thiouridine(34) in tRNA + L-cysteinyl-[protein] + A + AMP + diphosphate + H(+). Functionally, catalyzes the 2-thiolation of uridine at the wobble position (U34) of tRNA(Lys), tRNA(Glu) and tRNA(Gln), leading to the formation of s(2)U34, the first step of tRNA-mnm(5)s(2)U34 synthesis. Sulfur is provided by IscS, via a sulfur-relay system. Binds ATP and its substrate tRNAs. The polypeptide is tRNA-specific 2-thiouridylase MnmA (Pectobacterium atrosepticum (strain SCRI 1043 / ATCC BAA-672) (Erwinia carotovora subsp. atroseptica)).